The primary structure comprises 159 residues: NADH-quinone oxidoreductase subunit I (159 aa).

4Fe-4S ferredoxin-type domains follow at residues 51–80 and 90–119; these read RRYE…IESD and TRYD…EGPN. [4Fe-4S] cluster contacts are provided by C60, C63, C66, C70, C99, C102, C105, and C109.

It belongs to the complex I 23 kDa subunit family. NDH-1 is composed of 14 different subunits. Subunits NuoA, H, J, K, L, M, N constitute the membrane sector of the complex. [4Fe-4S] cluster serves as cofactor.

Its subcellular location is the cell inner membrane. It catalyses the reaction a quinone + NADH + 5 H(+)(in) = a quinol + NAD(+) + 4 H(+)(out). NDH-1 shuttles electrons from NADH, via FMN and iron-sulfur (Fe-S) centers, to quinones in the respiratory chain. The immediate electron acceptor for the enzyme in this species is believed to be ubiquinone. Couples the redox reaction to proton translocation (for every two electrons transferred, four hydrogen ions are translocated across the cytoplasmic membrane), and thus conserves the redox energy in a proton gradient. The sequence is that of NADH-quinone oxidoreductase subunit I from Rickettsia prowazekii (strain Madrid E).